We begin with the raw amino-acid sequence, 841 residues long: Protein translocase subunit SecA (841 aa).

Residues Gln-85, 103-107 (GEGKT), and Asp-492 each bind ATP. Residues 790–814 (IQGQTTAHQPKEGDEEKQAKKKPVR) are disordered. Over residues 798-807 (QPKEGDEEKQ) the composition is skewed to basic and acidic residues. 4 residues coordinate Zn(2+): Cys-825, Cys-827, Cys-836, and Cys-837.

It belongs to the SecA family. In terms of assembly, monomer and homodimer. Part of the essential Sec protein translocation apparatus which comprises SecA, SecYEG and auxiliary proteins SecDF. Other proteins may also be involved. Requires Zn(2+) as cofactor.

It is found in the cell membrane. The protein localises to the cytoplasm. The enzyme catalyses ATP + H2O + cellular proteinSide 1 = ADP + phosphate + cellular proteinSide 2.. In terms of biological role, part of the Sec protein translocase complex. Interacts with the SecYEG preprotein conducting channel. Has a central role in coupling the hydrolysis of ATP to the transfer of proteins into and across the cell membrane, serving as an ATP-driven molecular motor driving the stepwise translocation of polypeptide chains across the membrane. The protein is Protein translocase subunit SecA of Bacillus licheniformis (strain ATCC 14580 / DSM 13 / JCM 2505 / CCUG 7422 / NBRC 12200 / NCIMB 9375 / NCTC 10341 / NRRL NRS-1264 / Gibson 46).